Reading from the N-terminus, the 999-residue chain is Hypoxia up-regulated protein 1 (999 aa).

The signal sequence occupies residues 1-32 (MAATVRRQRPRRLLCWALVAVLLADLLALSDT). Residues N155, N222, and N515 are each glycosylated (N-linked (GlcNAc...) asparagine). Position 567 is a phosphoserine (S567). Positions 567 to 694 (SPEEESTLTK…KKPKPARKQK (128 aa)) are disordered. Positions 574-583 (LTKLGNTISS) are enriched in polar residues. N596 is a glycosylation site (N-linked (GlcNAc...) asparagine). 2 stretches are compositionally biased toward basic and acidic residues: residues 611 to 626 (GSKD…KEEA) and 641 to 668 (PKGD…KPNE). Residues 669 to 680 (KGQAGPEGAAPA) are compositionally biased toward low complexity. N830, N862, and N869 each carry an N-linked (GlcNAc...) asparagine glycan. K883 carries the N6-acetyllysine modification. The tract at residues 909–999 (AKFTKPRPRP…QKRPSKNDEL (91 aa)) is disordered. N922 and N931 each carry an N-linked (GlcNAc...) asparagine glycan. Positions 949 to 962 (EEAKPILEPDKEET) are enriched in basic and acidic residues. Residues 996-999 (NDEL) carry the Prevents secretion from ER motif.

It belongs to the heat shock protein 70 family. In terms of assembly, part of a large chaperone multiprotein complex comprising DNAJB11, HSP90B1, HSPA5, HYOU, PDIA2, PDIA4, PDIA6, PPIB, SDF2L1, UGGT1 and very small amounts of ERP29, but not, or at very low levels, CALR nor CANX.

The protein resides in the endoplasmic reticulum lumen. Functionally, has a pivotal role in cytoprotective cellular mechanisms triggered by oxygen deprivation. Promotes HSPA5/BiP-mediated ATP nucleotide exchange and thereby activates the unfolded protein response (UPR) pathway in the presence of endoplasmic reticulum stress. May play a role as a molecular chaperone and participate in protein folding. The chain is Hypoxia up-regulated protein 1 (Hyou1) from Mus musculus (Mouse).